A 434-amino-acid polypeptide reads, in one-letter code: Glutamate-1-semialdehyde 2,1-aminomutase (434 aa).

Lys-271 carries the N6-(pyridoxal phosphate)lysine modification.

Belongs to the class-III pyridoxal-phosphate-dependent aminotransferase family. HemL subfamily. As to quaternary structure, homodimer. Pyridoxal 5'-phosphate is required as a cofactor.

It is found in the cytoplasm. It carries out the reaction (S)-4-amino-5-oxopentanoate = 5-aminolevulinate. Its pathway is porphyrin-containing compound metabolism; protoporphyrin-IX biosynthesis; 5-aminolevulinate from L-glutamyl-tRNA(Glu): step 2/2. It participates in porphyrin-containing compound metabolism; chlorophyll biosynthesis. The chain is Glutamate-1-semialdehyde 2,1-aminomutase from Prochlorococcus marinus (strain MIT 9312).